A 295-amino-acid chain; its full sequence is Elongation factor Ts (295 aa).

The tract at residues 79–82 is involved in Mg(2+) ion dislocation from EF-Tu; the sequence is TDFV.

Belongs to the EF-Ts family.

It is found in the cytoplasm. Functionally, associates with the EF-Tu.GDP complex and induces the exchange of GDP to GTP. It remains bound to the aminoacyl-tRNA.EF-Tu.GTP complex up to the GTP hydrolysis stage on the ribosome. The sequence is that of Elongation factor Ts from Mycoplasma mycoides subsp. mycoides SC (strain CCUG 32753 / NCTC 10114 / PG1).